We begin with the raw amino-acid sequence, 136 residues long: Urease subunit beta (136 aa).

The tract at residues 113-136 is disordered; it reads NDEYAGVFGDNGAENVNKKGRKRS.

It belongs to the urease beta subunit family. In terms of assembly, heterotrimer of UreA (gamma), UreB (beta) and UreC (alpha) subunits. Three heterotrimers associate to form the active enzyme.

The protein localises to the cytoplasm. The catalysed reaction is urea + 2 H2O + H(+) = hydrogencarbonate + 2 NH4(+). It participates in nitrogen metabolism; urea degradation; CO(2) and NH(3) from urea (urease route): step 1/1. This chain is Urease subunit beta, found in Staphylococcus aureus (strain Newman).